The following is a 446-amino-acid chain: Plant intracellular Ras-group-related LRR protein 3 (446 aa).

Positions 65 to 100 (EACRAVVRLEETHDAYEALLQEAEGRLEAVYRSAME) form a coiled coil. Residues 101–121 (GKDLEEPDGRDESAAAAAGDD) are disordered. LRR repeat units lie at residues 138–160 (GKPV…AFGR), 161–184 (IQGL…IGGL), 185–207 (DHLE…IGLL), 208–230 (LNLR…ISKC), 232–254 (SLIE…GYEL), 255–277 (VNLR…ICEM), 279–300 (SLYL…IGKL), 301–324 (SSLE…SFGD), 325–347 (LLNL…NFGR), and 349–371 (DKLE…IVNK). Positions 372 to 384 (GVDAVKEYMLQRW) match the GVYW motif.

Belongs to the SHOC2 family. In terms of tissue distribution, widely expressed.

In terms of biological role, leucine-rich repeat protein that likely mediates protein interactions, possibly in the context of signal transduction. The protein is Plant intracellular Ras-group-related LRR protein 3 (IRL3) of Oryza sativa subsp. japonica (Rice).